Here is a 698-residue protein sequence, read N- to C-terminus: uncharacterized protein (698 aa).

Positions 1–17 are cleaved as a signal peptide; the sequence is MKKRHLLSLLALGISTA. Residue Cys-18 is the site of N-palmitoyl cysteine attachment. Residue Cys-18 is the site of S-diacylglycerol cysteine attachment.

This sequence to E.coli YmcA.

The protein resides in the cell membrane. This is an uncharacterized protein from Escherichia coli (strain K12).